A 594-amino-acid polypeptide reads, in one-letter code: Serine/threonine-protein kinase UL13 homolog (594 aa).

Disordered regions lie at residues methionine 1–cysteine 105 and glutamate 128–arginine 183. The segment covering arginine 38 to serine 47 has biased composition (basic residues). One can recognise a Protein kinase domain in the interval glycine 223–proline 594. Residues glycine 229 to valine 237 and lysine 248 contribute to the ATP site. The active-site Proton acceptor is aspartate 349.

The protein belongs to the protein kinase superfamily. Ser/Thr protein kinase family. Post-translationally, autophosphorylated.

It is found in the virion tegument. The protein localises to the host nucleus. The catalysed reaction is L-seryl-[protein] + ATP = O-phospho-L-seryl-[protein] + ADP + H(+). It catalyses the reaction L-threonyl-[protein] + ATP = O-phospho-L-threonyl-[protein] + ADP + H(+). Multifunctional serine/threonine kinase that plays a role in several processes including egress of virus particles from the nucleus, modulation of the actin cytoskeleton and regulation of viral and cellular gene expression. Regulates the nuclear localization of viral envelopment factors UL34 and UL31 homologs, by phosphorylating the US3 kinase homolog, indicating a role in nuclear egress. Disrupts host nuclear lamins, including LMNA and LMNB1. Phosphorylates the viral Fc receptor composed of glycoproteins E (gE) and I (gI). Phosphorylation of glycoprotein E (gE) by UL13 homolog alters its subcellular localization, from the host early endosome to the plasma membrane. Participates in the transcriptional regulation of cellular and viral mRNAs mainly by phosphorylating the viral transcriptional regulator ICP22 homolog. This chain is Serine/threonine-protein kinase UL13 homolog, found in Equus caballus (Horse).